Here is a 176-residue protein sequence, read N- to C-terminus: Large ribosomal subunit protein uL6 (176 aa).

The protein belongs to the universal ribosomal protein uL6 family. Part of the 50S ribosomal subunit.

Its function is as follows. This protein binds to the 23S rRNA, and is important in its secondary structure. It is located near the subunit interface in the base of the L7/L12 stalk, and near the tRNA binding site of the peptidyltransferase center. This is Large ribosomal subunit protein uL6 from Burkholderia thailandensis (strain ATCC 700388 / DSM 13276 / CCUG 48851 / CIP 106301 / E264).